Here is a 509-residue protein sequence, read N- to C-terminus: tRNA-2-methylthio-N(6)-dimethylallyladenosine synthase (509 aa).

The span at 1–15 (MNEQQRLASQQANSS) shows a compositional bias: polar residues. The interval 1–25 (MNEQQRLASQQANSSTKKEEKDYSK) is disordered. Residues 16-25 (TKKEEKDYSK) show a composition bias toward basic and acidic residues. An MTTase N-terminal domain is found at 66 to 184 (RKFYIRTYGC…LPYILKDAMF (119 aa)). [4Fe-4S] cluster-binding residues include cysteine 75, cysteine 111, cysteine 145, cysteine 221, cysteine 225, and cysteine 228. The 231-residue stretch at 207–437 (RRGDIKAWVN…NTLVNTLAIE (231 aa)) folds into the Radical SAM core domain. The 64-residue stretch at 440-503 (SRYKGQIVEV…TWSLNGELVE (64 aa)) folds into the TRAM domain.

It belongs to the methylthiotransferase family. MiaB subfamily. Monomer. The cofactor is [4Fe-4S] cluster.

The protein resides in the cytoplasm. It catalyses the reaction N(6)-dimethylallyladenosine(37) in tRNA + (sulfur carrier)-SH + AH2 + 2 S-adenosyl-L-methionine = 2-methylsulfanyl-N(6)-dimethylallyladenosine(37) in tRNA + (sulfur carrier)-H + 5'-deoxyadenosine + L-methionine + A + S-adenosyl-L-homocysteine + 2 H(+). Its function is as follows. Catalyzes the methylthiolation of N6-(dimethylallyl)adenosine (i(6)A), leading to the formation of 2-methylthio-N6-(dimethylallyl)adenosine (ms(2)i(6)A) at position 37 in tRNAs that read codons beginning with uridine. This chain is tRNA-2-methylthio-N(6)-dimethylallyladenosine synthase, found in Bacillus cereus (strain B4264).